A 103-amino-acid polypeptide reads, in one-letter code: Flagellar hook-basal body complex protein FliE (103 aa).

The protein belongs to the FliE family.

Its subcellular location is the bacterial flagellum basal body. The protein is Flagellar hook-basal body complex protein FliE of Yersinia pestis.